Reading from the N-terminus, the 1643-residue chain is Neurexin-3 (1643 aa).

Residues 1 to 27 form the signal peptide; the sequence is MSSTLHSVFFTLKVSILLGSLLGLCLG. The Laminin G-like 1 domain maps to 28-202; the sequence is LEFMGLPNQW…GVQMDAEGPC (175 aa). The Extracellular segment spans residues 28-1568; that stretch reads LEFMGLPNQW…EVIRESSSTT (1541 aa). N-linked (GlcNAc...) asparagine glycosylation is found at Asn58 and Asn105. An EGF-like 1 domain is found at 198–235; sequence AEGPCGERPCENGGICFLLDGHPTCDCSTTGYGGKLCS. Cystine bridges form between Cys202–Cys213, Cys207–Cys222, and Cys224–Cys234. 2 consecutive Laminin G-like domains span residues 258–440 and 447–639; these read VATF…VFKC and DPIN…KSSC. Residues Asp304, Leu321, and Met374 each coordinate Ca(2+). 5 disulfide bridges follow: Cys404–Cys440, Cys610–Cys639, Cys647–Cys658, Cys652–Cys667, and Cys669–Cys679. One can recognise an EGF-like 2 domain in the interval 643-680; that stretch reads SAKQCDSYPCKNNAVCKDGWNRFICDCTGTGYWGRTCE. Laminin G-like domains are found at residues 685 to 857 and 871 to 1046; these read ILSY…IDYC and DPVT…ERGC. Ca(2+)-binding residues include Asp732 and Leu749. Asn757 carries N-linked (GlcNAc...) asparagine glycosylation. Residue Arg807 participates in Ca(2+) binding. Cystine bridges form between Cys1018-Cys1046, Cys1053-Cys1064, Cys1058-Cys1073, and Cys1075-Cys1085. The 38-residue stretch at 1049 to 1086 folds into the EGF-like 3 domain; the sequence is PSTTCQEDSCANQGVCMQQWEGFTCDCSMTSYSGNQCN. The Laminin G-like 6 domain occupies 1090-1260; that stretch reads ATYIFGKSGG…NPNIKINGSV (171 aa). The Ca(2+) site is built by Asp1142 and Ile1159. Residue Asn1189 is glycosylated (N-linked (GlcNAc...) asparagine). Ca(2+) is bound by residues Ile1211 and Asn1213. Asn1257 and Asn1301 each carry an N-linked (GlcNAc...) asparagine glycan. The disordered stretch occupies residues 1294 to 1318; that stretch reads ATTTTRKNRSTASIQPTSDDLVSSA. Residues 1303 to 1318 show a composition bias toward polar residues; it reads STASIQPTSDDLVSSA. An O-linked (Xyl...) (heparan sulfate) serine glycan is attached at Ser1317. A helical membrane pass occupies residues 1569–1589; the sequence is GMVVGIVAAAALCILILLYAM. Topologically, residues 1590–1643 are cytoplasmic; sequence YKYRNRDEGSYQVDETRNYISNSAQSNGTLMKEKQQSSKSGHKKQKNKDREYYV. Residues 1611-1643 form a disordered region; it reads NSAQSNGTLMKEKQQSSKSGHKKQKNKDREYYV.

Belongs to the neurexin family. As to quaternary structure, the laminin G-like domain 2 binds to NXPH1. Specific isoforms bind to alpha-dystroglycan. The cytoplasmic C-terminal region binds to CASK. Specific isoforms bind neuroligins NLGN1, NLGN2 and NLGN3. Interacts with CLSTN3. Post-translationally, O-glycosylated; contains heparan sulfate. Heparan sulfate attachment is required for synapse development by mediating interactions with neuroligins. Expressed in the blood vessel walls (at protein level). Highly expressed in brain, lung, and pancreas; a lower level of expression is detectable in heart, placenta, liver, and kidney, whereas no expression can be observed in skeletal muscle. Isoform 4a is heart-specific.

Its subcellular location is the presynaptic cell membrane. Its function is as follows. Neuronal cell surface protein that may be involved in cell recognition and cell adhesion. May mediate intracellular signaling. The sequence is that of Neurexin-3 (NRXN3) from Homo sapiens (Human).